Reading from the N-terminus, the 29-residue chain is Glucagon (29 aa).

The protein belongs to the glucagon family.

The protein localises to the secreted. Functionally, glucagon plays a key role in glucose metabolism and homeostasis. Regulates blood glucose by increasing gluconeogenesis and decreasing glycolysis. The sequence is that of Glucagon (GCG) from Meleagris gallopavo (Wild turkey).